A 414-amino-acid chain; its full sequence is Isocitrate dehydrogenase [NADP] cytoplasmic (414 aa).

Serine 2 carries the post-translational modification N-acetylserine. The residue at position 42 (tyrosine 42) is a Phosphotyrosine. Residue 75–77 (TIT) coordinates NADP(+). A substrate-binding site is contributed by threonine 77. N6-acetyllysine is present on lysine 81. Residue arginine 82 participates in NADP(+) binding. Substrate contacts are provided by residues 94-100 (SPNGTIR) and arginine 109. An N6-succinyllysine modification is found at lysine 126. Positions 132 and 212 each coordinate substrate. 3 positions are modified to N6-acetyllysine: lysine 224, lysine 233, and lysine 243. Residue aspartate 252 participates in Mn(2+) binding. Lysine 260 contacts NADP(+). Residues aspartate 275 and aspartate 279 each coordinate Mn(2+). 310 to 315 (GTVTRH) lines the NADP(+) pocket. Lysine 321 is subject to N6-acetyllysine. Asparagine 328 is an NADP(+) binding site. Serine 389 carries the phosphoserine modification. Lysine 400 is subject to N6-succinyllysine.

Belongs to the isocitrate and isopropylmalate dehydrogenases family. As to quaternary structure, homodimer. Mg(2+) serves as cofactor. Requires Mn(2+) as cofactor. Post-translationally, acetylation at Lys-374 dramatically reduces catalytic activity. As to expression, highly expressed in the liver followed by kidney, lower expression in spleen, brain and lung.

The protein localises to the cytoplasm. It is found in the cytosol. The catalysed reaction is D-threo-isocitrate + NADP(+) = 2-oxoglutarate + CO2 + NADPH. Its activity is regulated as follows. Irreversibly inhibited by Cd(2+) concentrations above 50 uM. Catalyzes the NADP(+)-dependent oxidative decarboxylation of isocitrate (D-threo-isocitrate) to 2-ketoglutarate (2-oxoglutarate), which is required by other enzymes such as the phytanoyl-CoA dioxygenase. Plays a critical role in the generation of NADPH, an important cofactor in many biosynthesis pathways. May act as a corneal epithelial crystallin and may be involved in maintaining corneal epithelial transparency. The polypeptide is Isocitrate dehydrogenase [NADP] cytoplasmic (Idh1) (Mus musculus (Mouse)).